Consider the following 135-residue polypeptide: Ribonuclease P protein component 2 (135 aa).

The protein belongs to the eukaryotic/archaeal RNase P protein component 2 family. Consists of a catalytic RNA component and at least 4-5 protein subunits.

It localises to the cytoplasm. It carries out the reaction Endonucleolytic cleavage of RNA, removing 5'-extranucleotides from tRNA precursor.. Part of ribonuclease P, a protein complex that generates mature tRNA molecules by cleaving their 5'-ends. The polypeptide is Ribonuclease P protein component 2 (Methanococcus aeolicus (strain ATCC BAA-1280 / DSM 17508 / OCM 812 / Nankai-3)).